Here is a 190-residue protein sequence, read N- to C-terminus: Potassium-transporting ATPase KdpC subunit (190 aa).

A helical transmembrane segment spans residues 10 to 30 (TFIFLLLITGGVYPLLTTVLG).

The protein belongs to the KdpC family. The system is composed of three essential subunits: KdpA, KdpB and KdpC.

The protein resides in the cell inner membrane. Its function is as follows. Part of the high-affinity ATP-driven potassium transport (or Kdp) system, which catalyzes the hydrolysis of ATP coupled with the electrogenic transport of potassium into the cytoplasm. This subunit acts as a catalytic chaperone that increases the ATP-binding affinity of the ATP-hydrolyzing subunit KdpB by the formation of a transient KdpB/KdpC/ATP ternary complex. The chain is Potassium-transporting ATPase KdpC subunit from Escherichia coli O139:H28 (strain E24377A / ETEC).